We begin with the raw amino-acid sequence, 607 residues long: Threonine--tRNA ligase (607 aa).

The interval 200–502 is catalytic; sequence DHRKLGRELG…LIEEYAGDFP (303 aa). Zn(2+)-binding residues include C299, H350, and H479.

The protein belongs to the class-II aminoacyl-tRNA synthetase family. Homodimer. The cofactor is Zn(2+).

It localises to the cytoplasm. It carries out the reaction tRNA(Thr) + L-threonine + ATP = L-threonyl-tRNA(Thr) + AMP + diphosphate + H(+). In terms of biological role, catalyzes the attachment of threonine to tRNA(Thr) in a two-step reaction: L-threonine is first activated by ATP to form Thr-AMP and then transferred to the acceptor end of tRNA(Thr). Also edits incorrectly charged L-seryl-tRNA(Thr). The polypeptide is Threonine--tRNA ligase (Synechococcus sp. (strain ATCC 27144 / PCC 6301 / SAUG 1402/1) (Anacystis nidulans)).